The chain runs to 422 residues: Serine--tRNA ligase (422 aa).

Residue 229–231 (TAE) coordinates L-serine. 258–260 (RRE) contacts ATP. L-serine is bound at residue E281. An ATP-binding site is contributed by 345 to 348 (EISS). L-serine is bound at residue S379.

The protein belongs to the class-II aminoacyl-tRNA synthetase family. Type-1 seryl-tRNA synthetase subfamily. Homodimer. The tRNA molecule binds across the dimer.

It localises to the cytoplasm. It carries out the reaction tRNA(Ser) + L-serine + ATP = L-seryl-tRNA(Ser) + AMP + diphosphate + H(+). It catalyses the reaction tRNA(Sec) + L-serine + ATP = L-seryl-tRNA(Sec) + AMP + diphosphate + H(+). Its pathway is aminoacyl-tRNA biosynthesis; selenocysteinyl-tRNA(Sec) biosynthesis; L-seryl-tRNA(Sec) from L-serine and tRNA(Sec): step 1/1. Catalyzes the attachment of serine to tRNA(Ser). Is also able to aminoacylate tRNA(Sec) with serine, to form the misacylated tRNA L-seryl-tRNA(Sec), which will be further converted into selenocysteinyl-tRNA(Sec). The protein is Serine--tRNA ligase of Methanosarcina mazei (strain ATCC BAA-159 / DSM 3647 / Goe1 / Go1 / JCM 11833 / OCM 88) (Methanosarcina frisia).